The sequence spans 251 residues: Lactose phosphotransferase system repressor (251 aa).

Residues Lys-3 to Ser-58 form the HTH deoR-type domain. The segment at residues Ile-20–Asp-39 is a DNA-binding region (H-T-H motif).

Its function is as follows. Repressor of the lactose catabolism operon. Galactose-6-phosphate is the inducer. In Staphylococcus aureus (strain NCTC 8325 / PS 47), this protein is Lactose phosphotransferase system repressor (lacR).